We begin with the raw amino-acid sequence, 259 residues long: MLDKVKHIILVLSGKGGVGKSTVSTQLALTLAEADHKVGLLDIDLCGPSVPYLLGLEDRDVHQCDEGWVPVYTSAEKRLAVMSIGFLLKNRSDAVIWRGPKKTAMIKQFLEDVNWDELDYLIIDTPPGTSDEHITVMECLKTVRTEGAIIVTTPQEMALEDVRKEVTFCKKTGIPILGIVENMSGFVCPNCSECTNIFSSGGGHSLAELAKVPHLGTLPIDPRVGELAGTGKACVKELPDCTTSEVLRELVRTLTTVGQ.

14-21 (GKGGVGKS) contributes to the ATP binding site. The [4Fe-4S] cluster site is built by C188 and C191.

It belongs to the Mrp/NBP35 ATP-binding proteins family. NUBP2/CFD1 subfamily. Heterotetramer of 2 Nubp1 and 2 Nubp2 chains. [4Fe-4S] cluster is required as a cofactor.

The protein resides in the cytoplasm. Its function is as follows. Component of the cytosolic iron-sulfur (Fe/S) protein assembly (CIA) machinery. Required for maturation of extramitochondrial Fe-S proteins. The Nubp1-Nubp2 heterotetramer forms a Fe-S scaffold complex, mediating the de novo assembly of an Fe-S cluster and its transfer to target apoproteins. This is Cytosolic Fe-S cluster assembly factor Nubp2 homolog from Anopheles gambiae (African malaria mosquito).